The primary structure comprises 618 residues: Paraneoplastic antigen-like protein 5 (618 aa).

The span at 390 to 399 (AGEEGQRKES) shows a compositional bias: basic and acidic residues. Disordered regions lie at residues 390–409 (AGEE…EPDE), 451–475 (RDTL…EGQQ), and 519–549 (SMIT…ELRM).

The protein belongs to the PNMA family. In terms of tissue distribution, restricted to testis, where expression is low. Not detected in the brain.

The protein resides in the nucleus. The sequence is that of Paraneoplastic antigen-like protein 5 (Pnma5) from Mus musculus (Mouse).